Consider the following 1007-residue polypeptide: MEVFPLLLFLSFCWSRTWDLATADSIIHIGAIFDESAKKDDEVFRTAVGDLNQNEEILQTEKITFSVTFVDGNNPFQAVQEACELMNQGILALVSSIGCTSAGSLQSLADAMHIPHLFIQRSTAGTPRSGCGLTRSNRNDDYTLSVRPPVYLNEVILRVVTEYAWQKFIIFYDSEYDIRGIQEFLDKVSQQGMDVALQKVENNINKMITTLFDTMRIEELNRYRDTLRRAILVMNPATAKSFISEVVETNLVAFDCHWIIINEEINDVDVQELVRRSIGRLTIIRQTFPVPQNISQRCFRGNHRISSSLCDPKDPFAQNMEISNLYIYDTVLLLANAFHKKLEDRKWHSMASLSCIRKNSKPWQGGRSMLETIKKGGVNGLTGDLEFGENGGNPNVHFEILGTNYGEELGRGVRKLGCWNPVTGLNGSLTDKKLENNMRGVVLRVVTVLEEPFVMVSENVLGKPKKYQGFSIDVLDALSNYLGFNYEIYVAPDHKYGSPQEDGTWNGLVGELVFKRADIGISALTITPDRENVVDFTTRYMDYSVGVLLRRAEKTVDMFACLAPFDLSLWACIAGTVLLVGLLVYLLNWLNPPRLQMGSMTSTTLYNSMWFVYGSFVQQGGEVPYTTLATRMMMGAWWLFALIVISSYTANLAAFLTITRIESSIQSLQDLSKQTDIPYGTVLDSAVYQHVRMKGLNPFERDSMYSQMWRMINRSNGSENNVLESQAGIQKVKYGNYAFVWDAAVLEYVAINDPDCSFYTVGNTVADRGYGIALQHGSPYRDVFSQRILELQQSGDMDILKHKWWPKNGQCDLYSSVDAKQKGGALDIKSLAGVFCILAAGIVLSCLIAVLETWWSRRKGSRVPSKEDDKEIDLEHLHRRVNSLCTDDDSPHKQFSTSSIDLTPLDIDTLPTRQALEQISDFRNTHITTTTFIPEQIQTLSRTLSAKAASGFAFGSVPEHRTGPFRHRAPNGGFFRSPIKTMSSIPYQPTPTLGLNLGNDPDRGTSI.

The N-terminal stretch at 1–23 (MEVFPLLLFLSFCWSRTWDLATA) is a signal peptide. Positions 24–345 (DSIIHIGAIF…NAFHKKLEDR (322 aa)) are interaction with CBLN1 homotrimer. The Extracellular segment spans residues 24–566 (DSIIHIGAIF…DMFACLAPFD (543 aa)). Cystine bridges form between Cys83–Cys355, Cys99–Cys131, and Cys298–Cys310. A glycan (N-linked (GlcNAc...) asparagine) is linked at Asn293. An N-linked (GlcNAc...) asparagine glycan is attached at Asn426. Ca(2+) is bound by residues Glu531, Val534, and Asp535. Residues 567-587 (LSLWACIAGTVLLVGLLVYLL) traverse the membrane as a helical segment. Residues 588–635 (NWLNPPRLQMGSMTSTTLYNSMWFVYGSFVQQGGEVPYTTLATRMMMG) lie on the Cytoplasmic side of the membrane. Residues 636-656 (AWWLFALIVISSYTANLAAFL) traverse the membrane as a helical segment. Over 657–830 (TITRIESSIQ…QKGGALDIKS (174 aa)) the chain is Extracellular. Residues Asn713 and Asn716 are each glycosylated (N-linked (GlcNAc...) asparagine). Ca(2+) is bound by residues Asp753, Asp755, and Ser757. Residues 831-851 (LAGVFCILAAGIVLSCLIAVL) traverse the membrane as a helical segment. The Cytoplasmic portion of the chain corresponds to 852-1007 (ETWWSRRKGS…GNDPDRGTSI (156 aa)). Ser883 is modified (phosphoserine). Thr886 bears the Phosphothreonine mark. Ser890 is modified (phosphoserine). The tract at residues 921 to 991 (DFRNTHITTT…MSSIPYQPTP (71 aa)) is interaction with AP4M1. The short motif at 1005–1007 (TSI) is the PDZ-binding element. Residue Ser1006 is modified to Phosphoserine.

The protein belongs to the glutamate-gated ion channel (TC 1.A.10.1) family. GRID2 subfamily. As to quaternary structure, tetramer; dimer of dimers. Interacts with EML2, MAGI2 (via PDZ domains) and AP4M1. Interacts with BECN1, GOPC, GRID2IP, SHANK1 and SHANK2. Interacts with CBLN2, but not with CBLN4. Interacts with CBLN1 (via C1q domain); the interaction is CBLN1-NRX1 complex formation-dependent; CBLN1-binding is calcium-independent; CBLN1 hexamers anchor GRID2 N-terminal domain dimers to monomeric NRXN1 isoform beta; promotes synaptogenesis and mediates the D-Serine-dependent long term depression signals and AMPA receptor endocytosis. In terms of tissue distribution, expressed selectively in cerebellar Purkinje cells where it is localized in dendritic spines.

It localises to the postsynaptic cell membrane. It catalyses the reaction Ca(2+)(in) = Ca(2+)(out). It carries out the reaction Na(+)(in) = Na(+)(out). Its function is as follows. Member of the ionotropic glutamate receptor family, which plays a crucial role in synaptic organization and signal transduction in the central nervous system. Although it shares structural features with ionotropic glutamate receptors, does not bind glutamate as a primary ligand. Promotes synaptogenesis and mediates the D-Serine-dependent long term depression signals and AMPA receptor endocytosis of cerebellar parallel fiber-Purkinje cell (PF-PC) synapses through the NRX1B-CBLN1-GRID2 triad complex. In the presence of neurexins and cerebellins, forms cation-selective channels that are proposed to be gated by glycine and D-serine. However, recent research disputes this ligand-gated cation channel activity. Cation-selective ion channel activity can be triggered by GRM1 in Purkinje cells. The polypeptide is Glutamate receptor ionotropic, delta-2 (Grid2) (Mus musculus (Mouse)).